A 394-amino-acid polypeptide reads, in one-letter code: Teichoic acid poly(glycerol phosphate) polymerase (394 aa).

Belongs to the CDP-glycerol glycerophosphotransferase family.

Its subcellular location is the cell membrane. It carries out the reaction 4-O-[(2R)-glycerylphospho]-N-acetyl-beta-D-mannosaminyl-(1-&gt;4)-N-acetyl-alpha-D-glucosaminyl di-trans,octa-cis-undecaprenyl diphosphate + n CDP-glycerol = 4-O-{[(2R)-1-glycerylphospho](n)-(2R)-1-glycerylphospho}-N-acetyl-beta-D-mannosaminyl-(1-&gt;4)-N-acetyl-alpha-D-glucosaminyl undecaprenyl diphosphate + n CMP + n H(+). Catalyzes the addition of further 2-8 glycerol phosphate units from CDP-glycerol to the single glycerol phosphate unit bound to the prenolpyrophosphate-linked disaccharide. The function in the cell is unknown since the product is not part of the poly(ribitol phosphate) teichoic acid found in the cell walls. The protein is Teichoic acid poly(glycerol phosphate) polymerase (tarF) of Bacillus spizizenii (strain ATCC 23059 / NRRL B-14472 / W23) (Bacillus subtilis subsp. spizizenii).